The sequence spans 497 residues: Guanosine-5'-triphosphate,3'-diphosphate pyrophosphatase (497 aa).

Belongs to the GppA/Ppx family. GppA subfamily.

The enzyme catalyses guanosine 3'-diphosphate 5'-triphosphate + H2O = guanosine 3',5'-bis(diphosphate) + phosphate + H(+). It participates in purine metabolism; ppGpp biosynthesis; ppGpp from GTP: step 2/2. Catalyzes the conversion of pppGpp to ppGpp. Guanosine pentaphosphate (pppGpp) is a cytoplasmic signaling molecule which together with ppGpp controls the 'stringent response', an adaptive process that allows bacteria to respond to amino acid starvation, resulting in the coordinated regulation of numerous cellular activities. The chain is Guanosine-5'-triphosphate,3'-diphosphate pyrophosphatase from Pseudoalteromonas translucida (strain TAC 125).